The following is a 324-amino-acid chain: Probable acrylyl-CoA reductase AcuI (324 aa).

NADP(+) contacts are provided by residues Tyr-41, 156–159, 178–180, Arg-198, Leu-242, Ile-256, Ser-267, and Asn-313; these read SGGV and SGR.

It belongs to the zinc-containing alcohol dehydrogenase family. Acrylyl-CoA reductase subfamily. As to quaternary structure, homodimer.

The protein resides in the cytoplasm. The enzyme catalyses propanoyl-CoA + NADP(+) = acryloyl-CoA + NADPH + H(+). Functionally, probably catalyzes the NADPH-dependent reduction of acrylyl-CoA to propanoyl-CoA. The polypeptide is Probable acrylyl-CoA reductase AcuI (acuI) (Escherichia coli (strain K12)).